Here is a 136-residue protein sequence, read N- to C-terminus: Protein YebF (136 aa).

The first 23 residues, 1-23 (MKKTGLALVLATILLGMMGSVHA), serve as a signal peptide directing secretion. In terms of domain architecture, YebF/Cmi spans 30-117 (KVPACIGLNQ…KSGTMTYTGL (88 aa)). Residues C34 and C107 are joined by a disulfide bond. Residues 117–136 (LNAQTRPDPQIGLNSQAGPK) are disordered.

This sequence belongs to the YebF family.

The protein resides in the secreted. The chain is Protein YebF from Yersinia pseudotuberculosis serotype O:1b (strain IP 31758).